A 181-amino-acid polypeptide reads, in one-letter code: Adenine phosphoribosyltransferase (181 aa).

This sequence belongs to the purine/pyrimidine phosphoribosyltransferase family. Homodimer.

The protein resides in the cytoplasm. The catalysed reaction is AMP + diphosphate = 5-phospho-alpha-D-ribose 1-diphosphate + adenine. The protein operates within purine metabolism; AMP biosynthesis via salvage pathway; AMP from adenine: step 1/1. Functionally, catalyzes a salvage reaction resulting in the formation of AMP, that is energically less costly than de novo synthesis. The sequence is that of Adenine phosphoribosyltransferase from Vibrio atlanticus (strain LGP32) (Vibrio splendidus (strain Mel32)).